A 117-amino-acid polypeptide reads, in one-letter code: Huntingtin-interacting protein M (117 aa).

2 disordered regions span residues 1–30 (MSEKKNCKNSSTNNNQTQDPSRNELQVPRS) and 71–117 (EASN…RKND). Positions 72–81 (ASNNGSMRNT) are enriched in polar residues. Residues 82–117 (SQDREREVDNNREPHSAESDVTRFLFDEMPKSRKND) show a composition bias toward basic and acidic residues.

May interact with the N-terminus of HD.

The chain is Huntingtin-interacting protein M from Homo sapiens (Human).